The primary structure comprises 177 residues: Small ribosomal subunit protein uS4 (177 aa).

Residues 104–166 enclose the S4 RNA-binding domain; that stretch reads RRLQTIVYKK…PTSPFKQHPP (63 aa). The segment at 158–177 is disordered; that stretch reads TSPFKQHPPTQQGEENVQQA. The span at 165–177 shows a compositional bias: polar residues; it reads PPTQQGEENVQQA.

The protein belongs to the universal ribosomal protein uS4 family. In terms of assembly, part of the 30S ribosomal subunit. Contacts protein S5. The interaction surface between S4 and S5 is involved in control of translational fidelity.

Functionally, one of the primary rRNA binding proteins, it binds directly to 16S rRNA where it nucleates assembly of the body of the 30S subunit. With S5 and S12 plays an important role in translational accuracy. The polypeptide is Small ribosomal subunit protein uS4 (Sulfurisphaera tokodaii (strain DSM 16993 / JCM 10545 / NBRC 100140 / 7) (Sulfolobus tokodaii)).